The sequence spans 188 residues: Xanthine phosphoribosyltransferase (188 aa).

Positions 20 and 27 each coordinate xanthine. A 5-phospho-alpha-D-ribose 1-diphosphate-binding site is contributed by 127 to 131 (ANGNA). Lys-155 is a xanthine binding site.

The protein belongs to the purine/pyrimidine phosphoribosyltransferase family. Xpt subfamily. In terms of assembly, homodimer.

The protein localises to the cytoplasm. The enzyme catalyses XMP + diphosphate = xanthine + 5-phospho-alpha-D-ribose 1-diphosphate. It participates in purine metabolism; XMP biosynthesis via salvage pathway; XMP from xanthine: step 1/1. Its function is as follows. Converts the preformed base xanthine, a product of nucleic acid breakdown, to xanthosine 5'-monophosphate (XMP), so it can be reused for RNA or DNA synthesis. The polypeptide is Xanthine phosphoribosyltransferase (Phocaeicola vulgatus (strain ATCC 8482 / DSM 1447 / JCM 5826 / CCUG 4940 / NBRC 14291 / NCTC 11154) (Bacteroides vulgatus)).